The primary structure comprises 337 residues: Large ribosomal subunit protein uL3 (337 aa).

The segment at 1–20 (MASIHRPKRGSLAFSPRKRA) is disordered.

It belongs to the universal ribosomal protein uL3 family. Part of the 50S ribosomal subunit. Forms a cluster with proteins L14 and L24e.

In terms of biological role, one of the primary rRNA binding proteins, it binds directly near the 3'-end of the 23S rRNA, where it nucleates assembly of the 50S subunit. The protein is Large ribosomal subunit protein uL3 of Methanosarcina acetivorans (strain ATCC 35395 / DSM 2834 / JCM 12185 / C2A).